The sequence spans 206 residues: uncharacterized protein (206 aa).

Residues 14–200 form the YrdC-like domain; that stretch reads QRLINQAVEI…TPVVVREGVG (187 aa).

Belongs to the SUA5 family.

This is an uncharacterized protein from Escherichia coli O6:H1 (strain CFT073 / ATCC 700928 / UPEC).